A 368-amino-acid polypeptide reads, in one-letter code: Flap endonuclease 1 (368 aa).

An N-domain region spans residues 1–104; it reads MGIHDLSKVI…GELLKRGARR (104 aa). Residue D34 participates in Mg(2+) binding. Residues R47 and R70 each coordinate DNA. Position 86 (D86) interacts with Mg(2+). The segment at 103 to 123 is disordered; that stretch reads RRKEAQANLEEATEQGDTEQM. The interval 122-251 is I-domain; that stretch reads QMEKFSRRLV…QKAYQLIKEH (130 aa). Residues E158, E160, D179, and D181 each contribute to the Mg(2+) site. Residue E158 participates in DNA binding. Residues G229 and D231 each coordinate DNA. D231 serves as a coordination point for Mg(2+). An interaction with PCNA region spans residues 334-342; that stretch reads QQGRLDSFF.

The protein belongs to the XPG/RAD2 endonuclease family. FEN1 subfamily. As to quaternary structure, interacts with PCNA. Three molecules of FEN1 bind to one PCNA trimer with each molecule binding to one PCNA monomer. PCNA stimulates the nuclease activity without altering cleavage specificity. It depends on Mg(2+) as a cofactor. Phosphorylated. Phosphorylation upon DNA damage induces relocalization to the nuclear plasma.

It is found in the nucleus. The protein resides in the nucleolus. It localises to the nucleoplasm. The protein localises to the mitochondrion. In terms of biological role, structure-specific nuclease with 5'-flap endonuclease and 5'-3' exonuclease activities involved in DNA replication and repair. During DNA replication, cleaves the 5'-overhanging flap structure that is generated by displacement synthesis when DNA polymerase encounters the 5'-end of a downstream Okazaki fragment. It enters the flap from the 5'-end and then tracks to cleave the flap base, leaving a nick for ligation. Also involved in the long patch base excision repair (LP-BER) pathway, by cleaving within the apurinic/apyrimidinic (AP) site-terminated flap. Acts as a genome stabilization factor that prevents flaps from equilibrating into structures that lead to duplications and deletions. Also possesses 5'-3' exonuclease activity on nicked or gapped double-stranded DNA, and exhibits RNase H activity. Also involved in replication and repair of rDNA and in repairing mitochondrial DNA. The protein is Flap endonuclease 1 of Monosiga brevicollis (Choanoflagellate).